The chain runs to 622 residues: Chaperone protein HscA homolog (622 aa).

Belongs to the heat shock protein 70 family.

Chaperone involved in the maturation of iron-sulfur cluster-containing proteins. Has a low intrinsic ATPase activity which is markedly stimulated by HscB. This is Chaperone protein HscA homolog from Burkholderia lata (strain ATCC 17760 / DSM 23089 / LMG 22485 / NCIMB 9086 / R18194 / 383).